A 307-amino-acid polypeptide reads, in one-letter code: Cytochrome c1 1, heme protein, mitochondrial (307 aa).

Residues 1–64 constitute a mitochondrion transit peptide; it reads MVGGGVIQQI…LLSFSTVASA (64 aa). Residues 65 to 270 are Mitochondrial intermembrane-facing; that stretch reads DEAEHGLESP…EPEMEERKLM (206 aa). Positions 90-246 constitute a Cytochrome c domain; that stretch reads ASIRRGHQVY…YEDGVPATEA (157 aa). Heme c contacts are provided by Cys103, Cys106, His107, and Met226. Residues 271–288 traverse the membrane as a helical segment; the sequence is GFKWIFLLSLALLQAAYY. At 289–307 the chain is on the mitochondrial matrix side; it reads RRLKWSVLKSRKLVLDVVN.

It belongs to the cytochrome c family. As to quaternary structure, component of the ubiquinol-cytochrome c oxidoreductase (cytochrome b-c1 complex, complex III, CIII), a multisubunit enzyme composed of 10 subunits. The complex is composed of 3 respiratory subunits cytochrome b (MT-CYB), cytochrome c1 (CYC1-1 or CYC1-2) and Rieske protein (UCR1-1 or UCR1-2), 2 core protein subunits MPPalpha1 (or MPPalpha2) and MPPB, and 5 low-molecular weight protein subunits QCR7-1 (or QCR7-2), UCRQ-1 (or UCRQ-2), QCR9, UCRY and probably QCR6-1 (or QCR6-2). The complex exists as an obligatory dimer and forms supercomplexes (SCs) in the inner mitochondrial membrane with NADH-ubiquinone oxidoreductase (complex I, CI), resulting in different assemblies (supercomplexes SCI(1)III(2) and SCI(2)III(4)). Post-translationally, binds 1 heme c group covalently per subunit.

The protein resides in the mitochondrion inner membrane. Its function is as follows. Component of the ubiquinol-cytochrome c oxidoreductase, a multisubunit transmembrane complex that is part of the mitochondrial electron transport chain which drives oxidative phosphorylation. The respiratory chain contains 3 multisubunit complexes succinate dehydrogenase (complex II, CII), ubiquinol-cytochrome c oxidoreductase (cytochrome b-c1 complex, complex III, CIII) and cytochrome c oxidase (complex IV, CIV), that cooperate to transfer electrons derived from NADH and succinate to molecular oxygen, creating an electrochemical gradient over the inner membrane that drives transmembrane transport and the ATP synthase. The cytochrome b-c1 complex catalyzes electron transfer from ubiquinol to cytochrome c, linking this redox reaction to translocation of protons across the mitochondrial inner membrane, with protons being carried across the membrane as hydrogens on the quinol. In the process called Q cycle, 2 protons are consumed from the matrix, 4 protons are released into the intermembrane space and 2 electrons are passed to cytochrome c. Cytochrome c1 is a catalytic core subunit containing a c-type heme. It transfers electrons from the [2Fe-2S] iron-sulfur cluster of the Rieske protein to cytochrome c. In Arabidopsis thaliana (Mouse-ear cress), this protein is Cytochrome c1 1, heme protein, mitochondrial (CYC1-1).